Reading from the N-terminus, the 1140-residue chain is Multiple epidermal growth factor-like domains protein 10 (1140 aa).

The N-terminal stretch at 1–25 (MVISLNSCLSFICLLLCHWIGTASP) is a signal peptide. The segment at 1–857 (MVISLNSCLS…ALPADSYQIG (857 aa)) is necessary for interaction with AP2M1, self-assembly and formation of the irregular, mosaic-like adhesion pattern. The Extracellular segment spans residues 26 to 857 (LNLEDPNVCS…ALPADSYQIG (832 aa)). Residues 30-107 (DPNVCSHWES…FYESGEMCVP (78 aa)) enclose the EMI domain. Disulfide bonds link Cys34/Cys95, Cys60/Cys69, Cys94/Cys105, Cys109/Cys118, Cys113/Cys124, Cys126/Cys135, Cys148/Cys160, Cys154/Cys167, Cys169/Cys178, Cys191/Cys203, Cys197/Cys210, Cys212/Cys221, Cys234/Cys246, Cys240/Cys253, Cys255/Cys264, Cys281/Cys289, Cys283/Cys296, Cys298/Cys307, Cys320/Cys332, Cys326/Cys339, Cys341/Cys350, Cys409/Cys421, Cys415/Cys428, Cys430/Cys439, Cys456/Cys464, Cys458/Cys471, Cys473/Cys482, Cys495/Cys507, Cys501/Cys514, Cys516/Cys525, Cys542/Cys550, Cys544/Cys557, Cys559/Cys568, Cys581/Cys593, Cys587/Cys600, Cys602/Cys611, Cys669/Cys681, Cys675/Cys688, Cys690/Cys699, Cys716/Cys724, Cys718/Cys731, Cys733/Cys742, Cys755/Cys767, Cys761/Cys774, Cys776/Cys785, Cys802/Cys810, Cys804/Cys817, and Cys819/Cys828. EGF-like domains lie at 106-136 (VPHCADKCVHGRCIAPNTCQCEPGWGGTNCS), 144-179 (WGPHCTSRCQCKNGALCNPITGACHCAAGFRGWRCE), 187-222 (YGNDCHQRCQCQNGATCDHVTGECRCPPGYTGAFCE), 230-265 (HGPQCEQRCPCQNGGVCHHVTGECSCPSGWMGTVCG), 278-308 (SQECQCHNGGTCDAATGQCHCSPGYTGERCQ), 316-351 (YGVLCAETCQCVNGGKCYHVSGACLCEAGFAGERCE), 405-440 (YGEACQQICSCQNGADCDSVTGKCTCAPGFKGIDCS), 453-483 (SSRCGCKNDAVCSPVDGSCTCKAGWHGVDCS), 491-526 (WGFGCNLTCQCLNGGACNTLDGTCTCAPGWRGEKCE), 539-569 (AERCDCSHADGCHPTTGHCRCLPGWSGVHCD), 577-612 (WGPNCSLPCYCKNGASCSPDDGICECAPGFRGTTCQ), 665-700 (FGKNCAGICTCTNNGTCNPIDRSCQCYPGWIGSDCS), 713-743 (IHTCNCHNGAFCSAYDGECKCTPGWTGLYCT), 751-786 (YGKDCALICQCQNGADCDHISGQCTCRTGFMGRHCE), and 799-829 (RQICDCLNNSTCDHITGTCYCSPGWKGARCD). Asn134 carries N-linked (GlcNAc...) asparagine glycosylation. Residue Asn496 is glycosylated (N-linked (GlcNAc...) asparagine). The chain crosses the membrane as a helical span at residues 858–878 (AIAGIIILVLVVLFLLALFII). At 879 to 1140 (YRHKQKGKES…SSSNSSSSSE (262 aa)) the chain is on the cytoplasmic side. The interval 945–1140 (RDRMTVTKSK…SSSNSSSSSE (196 aa)) is necessary for formation of large intracellular vacuoles. Tyr1030 is modified (phosphotyrosine; by SRC). The segment at 1111 to 1140 (YDLLPVRDSSSSPKQEDSGGSSSNSSSSSE) is disordered. Residues 1128–1140 (SGGSSSNSSSSSE) are compositionally biased toward low complexity.

Belongs to the MEGF family. Homomer. Interacts with GULP1 and ABCA1. Interacts with AP2M1. Does not interact with MEGF11. Binds with high affinity to complement C1q. Interacts (via the cytoplasmic domain) with NOTCH1 (via NICD domain). Post-translationally, phosphorylated on tyrosine residues. Phosphorylation at Tyr-1030 may be important for muscle cell proliferation. In terms of processing, ubiquitinated; mono- and polyubiquitinated forms are detected. In terms of tissue distribution, expressed in muscle (at protein level).

Its subcellular location is the cell membrane. The protein localises to the cell projection. It localises to the phagocytic cup. Membrane receptor involved in phagocytosis by macrophages and astrocytes of apoptotic cells. Receptor for C1q, an eat-me signal, that binds phosphatidylserine expressed on the surface of apoptotic cells. Cooperates with ABCA1 within the process of engulfment. Promotes the formation of large intracellular vacuoles and may be responsible for the uptake of amyloid-beta peptides. Necessary for astrocyte-dependent apoptotic neuron clearance in the developing cerebellum. Plays role in muscle cell proliferation, adhesion and motility. Is also an essential factor in the regulation of myogenesis. Controls the balance between skeletal muscle satellite cells proliferation and differentiation through regulation of the notch signaling pathway. May also function in the mosaic spacing of specific neuron subtypes in the retina through homotypic retinal neuron repulsion. Mosaics provide a mechanism to distribute each cell type evenly across the retina, ensuring that all parts of the visual field have access to a full set of processing elements. This Homo sapiens (Human) protein is Multiple epidermal growth factor-like domains protein 10.